Consider the following 409-residue polypeptide: Multifunctional CCA protein (409 aa).

2 residues coordinate ATP: Gly-8 and Arg-11. Gly-8 and Arg-11 together coordinate CTP. Residues Asp-21 and Asp-23 each coordinate Mg(2+). 3 residues coordinate ATP: Arg-91, Arg-137, and Arg-140. CTP-binding residues include Arg-91, Arg-137, and Arg-140. One can recognise an HD domain in the interval 228 to 329; that stretch reads TGVHTLSVLE…LELLQSFDVY (102 aa).

It belongs to the tRNA nucleotidyltransferase/poly(A) polymerase family. Bacterial CCA-adding enzyme type 1 subfamily. In terms of assembly, monomer. Can also form homodimers and oligomers. The cofactor is Mg(2+). Ni(2+) is required as a cofactor.

It catalyses the reaction a tRNA precursor + 2 CTP + ATP = a tRNA with a 3' CCA end + 3 diphosphate. It carries out the reaction a tRNA with a 3' CCA end + 2 CTP + ATP = a tRNA with a 3' CCACCA end + 3 diphosphate. In terms of biological role, catalyzes the addition and repair of the essential 3'-terminal CCA sequence in tRNAs without using a nucleic acid template. Adds these three nucleotides in the order of C, C, and A to the tRNA nucleotide-73, using CTP and ATP as substrates and producing inorganic pyrophosphate. tRNA 3'-terminal CCA addition is required both for tRNA processing and repair. Also involved in tRNA surveillance by mediating tandem CCA addition to generate a CCACCA at the 3' terminus of unstable tRNAs. While stable tRNAs receive only 3'-terminal CCA, unstable tRNAs are marked with CCACCA and rapidly degraded. In Pseudomonas fluorescens (strain SBW25), this protein is Multifunctional CCA protein.